A 439-amino-acid polypeptide reads, in one-letter code: Exodeoxyribonuclease 7 large subunit (439 aa).

This sequence belongs to the XseA family. As to quaternary structure, heterooligomer composed of large and small subunits.

It is found in the cytoplasm. The catalysed reaction is Exonucleolytic cleavage in either 5'- to 3'- or 3'- to 5'-direction to yield nucleoside 5'-phosphates.. In terms of biological role, bidirectionally degrades single-stranded DNA into large acid-insoluble oligonucleotides, which are then degraded further into small acid-soluble oligonucleotides. The chain is Exodeoxyribonuclease 7 large subunit from Haemophilus influenzae (strain 86-028NP).